A 321-amino-acid chain; its full sequence is Biotin synthase (321 aa).

The Radical SAM core domain maps to 45–271 (FFGKKVKLNM…INPSKEIRIA (227 aa)). The [4Fe-4S] cluster site is built by cysteine 63, cysteine 67, and cysteine 70. The [2Fe-2S] cluster site is built by cysteine 106, cysteine 139, cysteine 199, and arginine 269.

It belongs to the radical SAM superfamily. Biotin synthase family. Homodimer. The cofactor is [4Fe-4S] cluster. [2Fe-2S] cluster is required as a cofactor.

It catalyses the reaction (4R,5S)-dethiobiotin + (sulfur carrier)-SH + 2 reduced [2Fe-2S]-[ferredoxin] + 2 S-adenosyl-L-methionine = (sulfur carrier)-H + biotin + 2 5'-deoxyadenosine + 2 L-methionine + 2 oxidized [2Fe-2S]-[ferredoxin]. The protein operates within cofactor biosynthesis; biotin biosynthesis; biotin from 7,8-diaminononanoate: step 2/2. Its function is as follows. Catalyzes the conversion of dethiobiotin (DTB) to biotin by the insertion of a sulfur atom into dethiobiotin via a radical-based mechanism. In Staphylococcus haemolyticus (strain JCSC1435), this protein is Biotin synthase.